The sequence spans 487 residues: Probable glycine dehydrogenase (decarboxylating) subunit 2 (487 aa).

K273 carries the N6-(pyridoxal phosphate)lysine modification.

It belongs to the GcvP family. C-terminal subunit subfamily. As to quaternary structure, the glycine cleavage system is composed of four proteins: P, T, L and H. In this organism, the P 'protein' is a heterodimer of two subunits. Pyridoxal 5'-phosphate serves as cofactor.

It catalyses the reaction N(6)-[(R)-lipoyl]-L-lysyl-[glycine-cleavage complex H protein] + glycine + H(+) = N(6)-[(R)-S(8)-aminomethyldihydrolipoyl]-L-lysyl-[glycine-cleavage complex H protein] + CO2. The glycine cleavage system catalyzes the degradation of glycine. The P protein binds the alpha-amino group of glycine through its pyridoxal phosphate cofactor; CO(2) is released and the remaining methylamine moiety is then transferred to the lipoamide cofactor of the H protein. The sequence is that of Probable glycine dehydrogenase (decarboxylating) subunit 2 from Lysinibacillus sphaericus (strain C3-41).